A 476-amino-acid chain; its full sequence is Mitochondrial-processing peptidase subunit beta (476 aa).

Residues 1 to 28 (MASRRLALNLAQGVKARAGGVINPFRRG) constitute a mitochondrion transit peptide. His84 provides a ligand contact to Zn(2+). The active-site Proton acceptor is the Glu87. His88 and Glu164 together coordinate Zn(2+).

The protein belongs to the peptidase M16 family. Heterodimer of mpp (alpha) and pep (beta) subunits, forming the mitochondrial processing protease (MPP) in which mpp is involved in substrate recognition and binding and pep is the catalytic subunit. Component of the ubiquinol-cytochrome c oxidoreductase (cytochrome b-c1 complex, complex III, CIII), a multisubunit enzyme composed of 10 subunits. The complex is composed of 3 respiratory subunits cytochrome b (cob), cytochrome c1 (cyt-1) and Rieske protein (fes-1), 2 core protein subunits pep and ucr-1, and 5 low-molecular weight protein subunits qcr6, qcr7, qcr8, qcr9 and probably NCU16844/qcr10. The complex exists as an obligatory dimer and forms supercomplexes (SCs) in the inner mitochondrial membrane with NADH-ubiquinone oxidoreductase (complex I, CI) and cytochrome c oxidase (complex IV, CIV), resulting in different assemblies (supercomplexes SCI(1)III(2), SCIII(2)IV(1) and SCIII(2)IV(2) as well as higher order I(x)III(y)IV(z) megacomplexes). Requires Zn(2+) as cofactor.

It localises to the mitochondrion matrix. Its subcellular location is the mitochondrion inner membrane. It carries out the reaction Release of N-terminal transit peptides from precursor proteins imported into the mitochondrion, typically with Arg in position P2.. With respect to regulation, binding to mpp is required for catalytic activity. Inhibited by metal chelator ethylenediaminetetraacetic acid (EDTA). In terms of biological role, catalytic subunit of the essential mitochondrial processing protease (MPP), which cleaves the mitochondrial sequence off newly imported precursors proteins. Preferentially, cleaves after an arginine at position P2. Its function is as follows. Component of the ubiquinol-cytochrome c oxidoreductase, a multisubunit transmembrane complex that is part of the mitochondrial electron transport chain which drives oxidative phosphorylation. The respiratory chain contains 3 multisubunit complexes succinate dehydrogenase (complex II, CII), ubiquinol-cytochrome c oxidoreductase (cytochrome b-c1 complex, complex III, CIII) and cytochrome c oxidase (complex IV, CIV), that cooperate to transfer electrons derived from NADH and succinate to molecular oxygen, creating an electrochemical gradient over the inner membrane that drives transmembrane transport and the ATP synthase. The cytochrome b-c1 complex catalyzes electron transfer from ubiquinol to cytochrome c, linking this redox reaction to translocation of protons across the mitochondrial inner membrane, with protons being carried across the membrane as hydrogens on the quinol. In the process called Q cycle, 2 protons are consumed from the matrix, 4 protons are released into the intermembrane space and 2 electrons are passed to cytochrome c. The chain is Mitochondrial-processing peptidase subunit beta from Neurospora crassa (strain ATCC 24698 / 74-OR23-1A / CBS 708.71 / DSM 1257 / FGSC 987).